A 70-amino-acid chain; its full sequence is Large ribosomal subunit protein eL38 (70 aa).

This sequence belongs to the eukaryotic ribosomal protein eL38 family.

The protein is Large ribosomal subunit protein eL38 (RpL38) of Anopheles gambiae (African malaria mosquito).